We begin with the raw amino-acid sequence, 630 residues long: Probable potassium transport system protein Kup 2 (630 aa).

Transmembrane regions (helical) follow at residues 14 to 34 (ATGFGALTLGSIGVVFGDIGT), 56 to 76 (VIVLGVLSLILWSLLIVVTAK), 108 to 128 (VPLLVLGVIGASMFIGDSMIT), 145 to 165 (PALQHYVVPLTVGILVALFAF), 176 to 196 (AFGPVMVLWFSTLAVLGLLHI), 214 to 234 (FMLSHGVIALVTIGAVFLAVT), 255 to 275 (WLFFVLPSLLLNYFGQGAMVL), 293 to 313 (LLVPMILLATAATVIASQAVI), 352 to 372 (MLLLAGVLLLVLLFHSSSALA), 375 to 395 (YGIAVSTTMVVDGVMGFVVVW), 402 to 422 (PAAAAALIIPFVAVDAIFFSA), and 427 to 447 (LMEGAWVPLLFGFLMAMLVWT).

It belongs to the HAK/KUP transporter (TC 2.A.72) family.

It is found in the cell inner membrane. The enzyme catalyses K(+)(in) + H(+)(in) = K(+)(out) + H(+)(out). In terms of biological role, transport of potassium into the cell. Likely operates as a K(+):H(+) symporter. This is Probable potassium transport system protein Kup 2 from Rhodopseudomonas palustris (strain BisA53).